Here is a 353-residue protein sequence, read N- to C-terminus: tRNA-specific 2-thiouridylase MnmA 2 (353 aa).

Residues 9-16 (AMSGGVDS) and Met-35 contribute to the ATP site. Residue Cys-98 is the Nucleophile of the active site. Cys-98 and Cys-194 form a disulfide bridge. Gly-122 serves as a coordination point for ATP. The interaction with tRNA stretch occupies residues 144–146 (KDQ). Cys-194 functions as the Cysteine persulfide intermediate in the catalytic mechanism. Residues 300 to 301 (RY) are interaction with tRNA.

It belongs to the MnmA/TRMU family.

It is found in the cytoplasm. The catalysed reaction is S-sulfanyl-L-cysteinyl-[protein] + uridine(34) in tRNA + AH2 + ATP = 2-thiouridine(34) in tRNA + L-cysteinyl-[protein] + A + AMP + diphosphate + H(+). In terms of biological role, catalyzes the 2-thiolation of uridine at the wobble position (U34) of tRNA, leading to the formation of s(2)U34. This chain is tRNA-specific 2-thiouridylase MnmA 2, found in Clostridium botulinum (strain Loch Maree / Type A3).